Here is a 145-residue protein sequence, read N- to C-terminus: Large ribosomal subunit protein uL16 (145 aa).

It belongs to the universal ribosomal protein uL16 family. In terms of assembly, part of the 50S ribosomal subunit.

Binds 23S rRNA and is also seen to make contacts with the A and possibly P site tRNAs. The protein is Large ribosomal subunit protein uL16 of Exiguobacterium sp. (strain ATCC BAA-1283 / AT1b).